Reading from the N-terminus, the 292-residue chain is MQSSNELIEIKDKLWNGSINVRILMGDDNIKDPKEFLITVYRNSYFPIYFPSVITYFQKYNEKIKYMPVWLEYETVPIKWNLPIGVLYDLLHLSSIVQNREDSSWTLTLRFSDDYPTDQVIPFTYTDVDNSVNYNKSLKEVVVNQLKQSCFVINGNSKPIMNLSEKDSDELWNSIRIHNLKSFNQINKKIIPIQKKFQKLPVKIYIPGSATIIHAPIYPYSDSGEAVLLRDILEEYLPDLMSSNNETLGSIYIHGINVETIINKDIIDVWELFKHLDNFLYIIVLFSTYSTI.

A Glycyl lysine isopeptide (Lys-Gly) (interchain with G-Cter in ATG12) cross-link involves residue Lys-147.

Belongs to the ATG5 family. In terms of assembly, conjugated with ATG12. In terms of processing, conjugated to ATG12; which is essential for autophagy.

It is found in the preautophagosomal structure membrane. Its function is as follows. Involved in cytoplasm to vacuole transport (Cvt) and autophagic vesicle formation. Autophagy is essential for maintenance of amino acid levels and protein synthesis under nitrogen starvation. Required for selective autophagic degradation of the nucleus (nucleophagy). Also required for mitophagy, which eliminates defective or superfluous mitochondria in order to fulfill cellular energy requirements and prevent excess ROS production. Conjugation with ATG12, through a ubiquitin-like conjugating system involving ATG7 as an E1-like activating enzyme and ATG10 as an E2-like conjugating enzyme, is essential for its function. The ATG12-ATG5 conjugate acts as an E3-like enzyme which is required for lipidation of ATG8 and ATG8 association to the vesicle membranes. In Debaryomyces hansenii (strain ATCC 36239 / CBS 767 / BCRC 21394 / JCM 1990 / NBRC 0083 / IGC 2968) (Yeast), this protein is Autophagy protein 5 (ATG5).